We begin with the raw amino-acid sequence, 725 residues long: NAD(+) hydrolase SARM1 (725 aa).

Residues 1–27 constitute a mitochondrion transit peptide; it reads MVLTILFSAYKLCRFFAMSSPRPGAER. The ARM 1 repeat unit spans residues 60 to 100; the sequence is EVQGALERALPELQQALSALKQAGGGRAVGAGLAEVFQLVE. NAD(+) contacts are provided by residues Trp103, Arg110, 149 to 158, and 191 to 194; these read EQILVAENRR and HMFK. 7 ARM repeats span residues 114-153, 155-194, 197-236, 238-281, 282-315, 316-355, and 360-403; these read QGLC…QILV, ENRR…HMFK, EETC…NCAM, GGQA…LATN, KEVE…CLVD, ASDT…AEAV, and KNRN…EEVP. 2 SAM domains span residues 413 to 477 and 483 to 549; these read WKEA…LKTF and CDRS…MLHS. Phosphoserine occurs at positions 549 and 559. The TIR domain occupies 561–704; the sequence is DVPDVFISYR…KIIRFLQGRS (144 aa). Residues 570-571 and Glu600 contribute to the NAD(+) site; that span reads RR. The active site involves Glu643. Residues 705–725 are disordered; it reads SRDSSAGSDTSLEGAAPMGPT.

Belongs to the SARM1 family. In terms of assembly, homooctamer; forms an octameric ring via SAM domains. Interacts with TICAM1/TRIF and thereby interferes with TICAM1/TRIF function. Interacts with MAPK10/JNK3 and SDC2 (via cytoplasmic domain). Post-translationally, phosphorylation at Ser-549 by JNK kinases (MAPK8, MAPK9 and /or MAPK10) enhance the NAD(+) hydrolase (NADase) activity. Phosphorylation at Ser-549 and subsequent activation takes place in response to oxidative stress conditions and inhibits mitochondrial respiration. In terms of tissue distribution, highest expression seen in the spleen and the brain, followed by lung, kidney, liver and other tissues.

The protein resides in the cytoplasm. Its subcellular location is the cell projection. The protein localises to the axon. It localises to the dendrite. It is found in the synapse. The protein resides in the mitochondrion. It catalyses the reaction NAD(+) + H2O = ADP-D-ribose + nicotinamide + H(+). It carries out the reaction NAD(+) = cyclic ADP-beta-D-ribose + nicotinamide + H(+). The catalysed reaction is NADP(+) + H2O = ADP-D-ribose 2'-phosphate + nicotinamide + H(+). With respect to regulation, autoinhibited: in the inactive state, the enzymatic TIR domain is held apart by the autoinhibiting ARM repeats. NAD(+)-binding to ARM repeats maintains an inactive state by promoting interaction between ARM repeats and the TIR domain, thereby facilitating inhibition of the enzymatic TIR domain. Following activation, possibly by nicotinamide mononucleotide (NMN), auto-inhibitory interactions are released, allowing self-association of the TIR domains and subsequent activation of the NAD(+) hydrolase (NADase) activity. Self-association of TIR domains is facilitated by the octamer of SAM domains. NAD(+) hydrolase, which plays a key role in axonal degeneration following injury by regulating NAD(+) metabolism. Acts as a negative regulator of MYD88- and TRIF-dependent toll-like receptor signaling pathway by promoting Wallerian degeneration, an injury-induced form of programmed subcellular death which involves degeneration of an axon distal to the injury site. Wallerian degeneration is triggered by NAD(+) depletion: in response to injury, SARM1 is activated and catalyzes cleavage of NAD(+) into ADP-D-ribose (ADPR), cyclic ADPR (cADPR) and nicotinamide; NAD(+) cleavage promoting cytoskeletal degradation and axon destruction. Also able to hydrolyze NADP(+), but not other NAD(+)-related molecules. Can activate neuronal cell death in response to stress. Regulates dendritic arborization through the MAPK4-JNK pathway. Involved in innate immune response: inhibits both TICAM1/TRIF- and MYD88-dependent activation of JUN/AP-1, TRIF-dependent activation of NF-kappa-B and IRF3, and the phosphorylation of MAPK14/p38. The protein is NAD(+) hydrolase SARM1 of Sus scrofa (Pig).